A 159-amino-acid polypeptide reads, in one-letter code: NADH-quinone oxidoreductase subunit B (159 aa).

Residues C37, C38, C102, and C132 each coordinate [4Fe-4S] cluster.

Belongs to the complex I 20 kDa subunit family. In terms of assembly, NDH-1 is composed of 14 different subunits. Subunits NuoB, C, D, E, F, and G constitute the peripheral sector of the complex. [4Fe-4S] cluster is required as a cofactor.

Its subcellular location is the cell inner membrane. It carries out the reaction a quinone + NADH + 5 H(+)(in) = a quinol + NAD(+) + 4 H(+)(out). NDH-1 shuttles electrons from NADH, via FMN and iron-sulfur (Fe-S) centers, to quinones in the respiratory chain. Couples the redox reaction to proton translocation (for every two electrons transferred, four hydrogen ions are translocated across the cytoplasmic membrane), and thus conserves the redox energy in a proton gradient. The polypeptide is NADH-quinone oxidoreductase subunit B (Vesicomyosocius okutanii subsp. Calyptogena okutanii (strain HA)).